We begin with the raw amino-acid sequence, 144 residues long: Large ribosomal subunit protein uL13 (144 aa).

The protein belongs to the universal ribosomal protein uL13 family. In terms of assembly, part of the 50S ribosomal subunit.

In terms of biological role, this protein is one of the early assembly proteins of the 50S ribosomal subunit, although it is not seen to bind rRNA by itself. It is important during the early stages of 50S assembly. This chain is Large ribosomal subunit protein uL13, found in Desulfovibrio desulfuricans (strain ATCC 27774 / DSM 6949 / MB).